The chain runs to 949 residues: Nonsense-mediated mRNA decay factor SMG8 (949 aa).

3 disordered regions span residues 564 to 607, 624 to 652, and 748 to 768; these read SGAR…LSPT, NESQ…DTEN, and PKQQ…QQRW. The segment covering 571 to 581 has biased composition (acidic residues); it reads EGDDEPEDEVV. The span at 594 to 607 shows a compositional bias: polar residues; that stretch reads NTASNGCSQPLSPT. Low complexity predominate over residues 624 to 648; sequence NESQASSEQLSNSEQNTSSSGTSSA. The span at 749–768 shows a compositional bias: basic residues; it reads KQQHHTHHQQQHPGKKQQRW.

The protein belongs to the SMG8 family.

Its function is as follows. Involved in nonsense-mediated decay (NMD) of mRNAs containing premature stop codons. Probable component of kinase complex containing nonC and recruited to stalled ribosomes. This chain is Nonsense-mediated mRNA decay factor SMG8, found in Drosophila erecta (Fruit fly).